A 90-amino-acid polypeptide reads, in one-letter code: Molybdopterin synthase sulfur carrier subunit (90 aa).

Gly90 is subject to 1-thioglycine; alternate. Gly90 carries the glycyl adenylate; alternate modification.

This sequence belongs to the MoaD family. MOCS2A subfamily. As to quaternary structure, heterotetramer; composed of 2 small (Mocs2A) and 2 large (Mocs2B) subunits. Post-translationally, C-terminal thiocarboxylation occurs in 2 steps, it is first acyl-adenylated (-COAMP) via the hesA/moeB/thiF part of MOCS3, then thiocarboxylated (-COSH) via the rhodanese domain of MOCS3.

The protein localises to the cytoplasm. Its pathway is cofactor biosynthesis; molybdopterin biosynthesis. Acts as a sulfur carrier required for molybdopterin biosynthesis. Component of the molybdopterin synthase complex that catalyzes the conversion of precursor Z into molybdopterin by mediating the incorporation of 2 sulfur atoms into precursor Z to generate a dithiolene group. In the complex, serves as sulfur donor by being thiocarboxylated (-COSH) at its C-terminus by MOCS3. After interaction with Mocs2B, the sulfur is then transferred to precursor Z to form molybdopterin. In Drosophila simulans (Fruit fly), this protein is Molybdopterin synthase sulfur carrier subunit.